Consider the following 529-residue polypeptide: 56 kDa type-specific antigen (529 aa).

The signal sequence occupies residues 1–22 (MKKIMLIASAMSALSLPFSASA). The helical transmembrane segment at 67–87 (LTTSMPFGGTLAAGMTIAPGF) threads the bilayer. Residues 106-116 (GKTGSDADIRS) are compositionally biased toward basic and acidic residues. Disordered regions lie at residues 106 to 134 (GKTGSDADIRSGADSPMPQRYKLTPPQPT) and 392 to 424 (DGGCNGGGDNKKKRGASEDSDAGGASKGGKGKE). A helical transmembrane segment spans residues 477–492 (TGMVASGALGVAINAA).

It is found in the cell membrane. May be an adherent factor for rickettsial adsorption to the host-cell surface and a determinant of virulence of individual rickettsial strain. It is the major outer membrane protein. The polypeptide is 56 kDa type-specific antigen (Orientia tsutsugamushi (Rickettsia tsutsugamushi)).